The primary structure comprises 829 residues: MTPKFDIDYVLANITEDDKIALLSGSDFWHTHAIPKFNVPPIRTTDGPNGIRGTKFFAGVPAACLPCGTALGATWDRDLLHQAGVLLGKECLAKGAHCWLGPTINMQRSPLGGRGFESFAEDPHLSGIMAKSIILGCESTGVISTVKHYVGNDQEHERRAVDVLVTPRALREIYLRPFQIVARDAHPGALMTSYNKINGKHVVENPAMLDIVRKDWHWDPLIMSDWLGTYTTIDSLNAGLDLEMPGPTRYRGKYIESAMQARLIKQSTISKRARKVLEFVERASRAPVSADETGRDFPEDRALNRTLCANSIVLLKNDGNLLPIPKTVKKIALIGSHVKTPAISGGGSASLEPYYAVSLYDAVVEALPDAEILYEAGAYAHRMLPVIDRMLSNAVIHFYNEPPEKERTLLATEPVVNTAFQLMDYNAPGLNRALFWATLIGEFTPDVSGLWDFGLTVFGTATLFIDDEMVIDNATRQTRGTAFFGKGTVQEVGQKQLTAGQTYKIRIEFGSANTSPMKAIGVVHFGGGAAHLGACLHMDPEQMVANAVRVAAEADYTIVCTGLNRDWESEGFDRPDMDLPPGIDALISSVLDVAADRTVIVNQSGTPVTMPWAHRARGIVQAWYGGNETGHGIADVLFGDVNPSGKLPLSWPADVRHNPTYLNNMSVGGRMLYGEDVYIGYRFYEKVGREVLFPFGHGLSYTTFHVSPEATVSPIVFSSDSPPTATVLVKNTGPMAGAQTLQLYIAAPNSTTPRPVKELHGFTKVFLQSGEERSVSIHIDRYATSFWDEIEDMWKSEEGVYQVLIGTSSQEIVSRGEFRVEQTRYWRGV.

N-linked (GlcNAc...) asparagine glycosylation is present at N13. The active site involves D225. Residues N304, N473, N602, N627, N664, and N749 are each glycosylated (N-linked (GlcNAc...) asparagine). Residues 389–548 (RMLSNAVIHF…DPEQMVANAV (160 aa)) enclose the PA14 domain.

The protein belongs to the glycosyl hydrolase 3 family.

The protein localises to the secreted. The catalysed reaction is Hydrolysis of terminal, non-reducing beta-D-glucosyl residues with release of beta-D-glucose.. It functions in the pathway glycan metabolism; cellulose degradation. Functionally, beta-glucosidases are one of a number of cellulolytic enzymes involved in the degradation of cellulosic biomass. Catalyzes the last step releasing glucose from the inhibitory cellobiose. The polypeptide is Probable beta-glucosidase H (bglH) (Aspergillus fumigatus (strain CBS 144.89 / FGSC A1163 / CEA10) (Neosartorya fumigata)).